A 201-amino-acid polypeptide reads, in one-letter code: Dephospho-CoA kinase (201 aa).

The region spanning 4-201 is the DPCK domain; it reads VIGLTGGIAS…LLDTWSNIEK (198 aa). ATP is bound at residue 12-17; that stretch reads ASGKST.

It belongs to the CoaE family.

It is found in the cytoplasm. It carries out the reaction 3'-dephospho-CoA + ATP = ADP + CoA + H(+). It functions in the pathway cofactor biosynthesis; coenzyme A biosynthesis; CoA from (R)-pantothenate: step 5/5. In terms of biological role, catalyzes the phosphorylation of the 3'-hydroxyl group of dephosphocoenzyme A to form coenzyme A. The polypeptide is Dephospho-CoA kinase (Bacillus licheniformis (strain ATCC 14580 / DSM 13 / JCM 2505 / CCUG 7422 / NBRC 12200 / NCIMB 9375 / NCTC 10341 / NRRL NRS-1264 / Gibson 46)).